We begin with the raw amino-acid sequence, 528 residues long: MSTVNVQIGLHELLNGSNAQIQLSVPQLVEKVLMRNEGKLTSTGAVSASTGKYTGRSPKDKFIVKEASVADKIAWGAVNQPISEEHFNKLYIKVLEYLKEKEELFIFKGFAGADRNYRLPIQVVNEYAWHNLFVHQLFIRPNEEELATHESEFTIVSAPNFKADPAIDGTNSEAFIMVSFEKRIVLIGGTEYAGEMKKSIFSIMNFLLPEQDILSMHCSSNVGEEGDVALFFGLSGTGKTTLSADPNRKLIGDDEHGWSDNGVFNIEGGCYAKCVNLSHEKEPQIFDAIKFGSVLENVVIDGQTRIADYNDTTLTENTRAAYPMHAIDNIVLPSVAGHPNTIIFLTADASGVLPPISKLSKEQAMYHFLSGYTSKLAGTERGVTSPQATFSTCFGSPFLPLDASRYAEMLGEKIEKHDAKVFLVNTGWTGGEYGVGKRMNLGYTRAMIQAALSGELAKAETAKHDIFGLEVPRHVPGVPDEVLMPEQTWADKDAYKVKAIELANEFKENFKKFDSVSEAIINLGGPIA.

Residues Arg-56, Tyr-192, and Lys-198 each coordinate substrate. Residues Lys-198, His-217, and 233–241 contribute to the ATP site; that span reads GLSGTGKTT. Mn(2+) is bound by residues Lys-198 and His-217. Asp-254 serves as a coordination point for Mn(2+). Glu-282, Arg-319, and Thr-444 together coordinate ATP. Arg-319 is a substrate binding site.

The protein belongs to the phosphoenolpyruvate carboxykinase (ATP) family. Mn(2+) is required as a cofactor.

It is found in the cytoplasm. It carries out the reaction oxaloacetate + ATP = phosphoenolpyruvate + ADP + CO2. It participates in carbohydrate biosynthesis; gluconeogenesis. Its function is as follows. Involved in the gluconeogenesis. Catalyzes the conversion of oxaloacetate (OAA) to phosphoenolpyruvate (PEP) through direct phosphoryl transfer between the nucleoside triphosphate and OAA. The chain is Phosphoenolpyruvate carboxykinase (ATP) from Bacillus mycoides (strain KBAB4) (Bacillus weihenstephanensis).